A 427-amino-acid polypeptide reads, in one-letter code: 3-phosphoshikimate 1-carboxyvinyltransferase (427 aa).

Residues Lys-22, Ser-23, and Arg-27 each contribute to the 3-phosphoshikimate site. Residue Lys-22 coordinates phosphoenolpyruvate. Residues Gly-96 and Arg-124 each contribute to the phosphoenolpyruvate site. Residues Ser-169, Ser-170, Gln-171, Ser-197, Asp-313, Asn-336, and Lys-340 each contribute to the 3-phosphoshikimate site. A phosphoenolpyruvate-binding site is contributed by Gln-171. Asp-313 serves as the catalytic Proton acceptor. Phosphoenolpyruvate contacts are provided by Arg-344, Arg-386, and Lys-411.

It belongs to the EPSP synthase family. In terms of assembly, monomer.

Its subcellular location is the cytoplasm. The catalysed reaction is 3-phosphoshikimate + phosphoenolpyruvate = 5-O-(1-carboxyvinyl)-3-phosphoshikimate + phosphate. Its pathway is metabolic intermediate biosynthesis; chorismate biosynthesis; chorismate from D-erythrose 4-phosphate and phosphoenolpyruvate: step 6/7. Catalyzes the transfer of the enolpyruvyl moiety of phosphoenolpyruvate (PEP) to the 5-hydroxyl of shikimate-3-phosphate (S3P) to produce enolpyruvyl shikimate-3-phosphate and inorganic phosphate. This chain is 3-phosphoshikimate 1-carboxyvinyltransferase, found in Escherichia coli O8 (strain IAI1).